We begin with the raw amino-acid sequence, 208 residues long: Protein GrpE (208 aa).

The disordered stretch occupies residues 1–62; the sequence is MTEKDESVKS…ETAVDPKDEE (62 aa). Over residues 46 to 55 the composition is skewed to acidic residues; that stretch reads SNEESSEETA.

This sequence belongs to the GrpE family. As to quaternary structure, homodimer.

The protein localises to the cytoplasm. Its function is as follows. Participates actively in the response to hyperosmotic and heat shock by preventing the aggregation of stress-denatured proteins, in association with DnaK and GrpE. It is the nucleotide exchange factor for DnaK and may function as a thermosensor. Unfolded proteins bind initially to DnaJ; upon interaction with the DnaJ-bound protein, DnaK hydrolyzes its bound ATP, resulting in the formation of a stable complex. GrpE releases ADP from DnaK; ATP binding to DnaK triggers the release of the substrate protein, thus completing the reaction cycle. Several rounds of ATP-dependent interactions between DnaJ, DnaK and GrpE are required for fully efficient folding. The polypeptide is Protein GrpE (Staphylococcus haemolyticus (strain JCSC1435)).